The following is a 61-amino-acid chain: Small ribosomal subunit protein uS14 (61 aa).

4 residues coordinate Zn(2+): C24, C27, C40, and C43.

It belongs to the universal ribosomal protein uS14 family. Zinc-binding uS14 subfamily. In terms of assembly, part of the 30S ribosomal subunit. Contacts proteins S3 and S10. Zn(2+) is required as a cofactor.

Functionally, binds 16S rRNA, required for the assembly of 30S particles and may also be responsible for determining the conformation of the 16S rRNA at the A site. The chain is Small ribosomal subunit protein uS14 from Borrelia hermsii (strain HS1 / DAH).